Consider the following 583-residue polypeptide: Protein NRT1/ PTR FAMILY 5.1 (583 aa).

The helical transmembrane segment at 74–94 (WSGAVWITPIAGAYIADSYIG) threads the bilayer. Residue threonine 98 is modified to Phosphothreonine. 10 helical membrane-spanning segments follow: residues 99–119 (FTAS…AVTV), 134–154 (ASSL…IGAG), 182–202 (FFNW…LGLV), 210–230 (WGLG…VFYI), 320–340 (VLGL…WAQV), 361–381 (IPAA…VPMY), 405–425 (LGVG…VEVK), 446–466 (IFWL…NAIG), 485–505 (TFFT…VTMI), and 529–549 (YYYG…VWAA).

It belongs to the major facilitator superfamily. Proton-dependent oligopeptide transporter (POT/PTR) (TC 2.A.17) family. Expressed in flowers. Detected in stems, leaves and siliques.

It is found in the membrane. In Arabidopsis thaliana (Mouse-ear cress), this protein is Protein NRT1/ PTR FAMILY 5.1 (NPF5.1).